The chain runs to 86 residues: Cell division topological specificity factor (86 aa).

This sequence belongs to the MinE family.

Functionally, prevents the cell division inhibition by proteins MinC and MinD at internal division sites while permitting inhibition at polar sites. This ensures cell division at the proper site by restricting the formation of a division septum at the midpoint of the long axis of the cell. This is Cell division topological specificity factor from Stenotrophomonas maltophilia (strain K279a).